The sequence spans 104 residues: Putative zinc finger protein ORF104b (104 aa).

A C2H2-type zinc finger spans residues 62-85 (YECKYCHTRYLSHTGIVYHLEREH).

This chain is Putative zinc finger protein ORF104b, found in Acidianus sp. F28 (AFV-2).